Consider the following 514-residue polypeptide: Activin receptor type-2A (514 aa).

An N-terminal signal peptide occupies residues 1 to 20; sequence MGAATKLAFAVFLISCSSAG. The Extracellular portion of the chain corresponds to 21–136; sequence SILGRSETKE…TSNPVTTKPP (116 aa). Disulfide bonds link Cys-31-Cys-61, Cys-51-Cys-79, Cys-86-Cys-105, Cys-92-Cys-104, and Cys-106-Cys-111. N-linked (GlcNAc...) asparagine glycans are attached at residues Asn-46, Asn-67, and Asn-88. Residues 137-162 traverse the membrane as a helical segment; that stretch reads LFNTLLYSLVPIMVVAVIVLFSFWMY. Over 163-514 the chain is Cytoplasmic; sequence RHHKLAYPPV…VDFPPKESSL (352 aa). The Protein kinase domain maps to 193 to 486; the sequence is LQLLEVKARG…EERIIQMQKL (294 aa). Residues 199–207 and Lys-220 contribute to the ATP site; that span reads KARGRFGCV. Asp-323 functions as the Proton acceptor in the catalytic mechanism.

This sequence belongs to the protein kinase superfamily. TKL Ser/Thr protein kinase family. TGFB receptor subfamily.

The protein localises to the cell membrane. The catalysed reaction is L-threonyl-[receptor-protein] + ATP = O-phospho-L-threonyl-[receptor-protein] + ADP + H(+). The enzyme catalyses L-seryl-[receptor-protein] + ATP = O-phospho-L-seryl-[receptor-protein] + ADP + H(+). Its function is as follows. Receptor for activin A, activin B and inhibin A. Involved in transmembrane signaling. This is Activin receptor type-2A (acvr2a) from Xenopus laevis (African clawed frog).